Reading from the N-terminus, the 425-residue chain is 2-methylserine hydroxymethyltransferase (425 aa).

(6S)-5,6,7,8-tetrahydrofolate contacts are provided by residues Leu-126 and 130–132; that span reads GHL. Lys-235 carries the post-translational modification N6-(pyridoxal phosphate)lysine. Glu-251 contributes to the (6S)-5,6,7,8-tetrahydrofolate binding site.

It belongs to the SHMT family. Homodimer. Pyridoxal 5'-phosphate is required as a cofactor.

It localises to the cytoplasm. The enzyme catalyses (6R)-5,10-methylene-5,6,7,8-tetrahydrofolate + D-alanine + H2O = 2-methylserine + (6S)-5,6,7,8-tetrahydrofolate. It functions in the pathway one-carbon metabolism; tetrahydrofolate interconversion. Its activity is regulated as follows. Inhibited by hydroxylamine and sodium borohydride. Catalyzes the reversible interconversion of alpha-methyl-L-serine to D-alanine with tetrahydrofolate (THF) serving as the one-carbon carrier. Cannot use alpha-methyl-D-serine, L-serine, D-serine or L-alanine. The polypeptide is 2-methylserine hydroxymethyltransferase (Paracoccus sp).